A 221-amino-acid chain; its full sequence is Phosphoglycolate phosphatase (221 aa).

The Nucleophile role is filled by Asp10. Mg(2+)-binding residues include Asp10, Asp12, and Asp168.

It belongs to the HAD-like hydrolase superfamily. CbbY/CbbZ/Gph/YieH family. It depends on Mg(2+) as a cofactor.

The catalysed reaction is 2-phosphoglycolate + H2O = glycolate + phosphate. Its pathway is organic acid metabolism; glycolate biosynthesis; glycolate from 2-phosphoglycolate: step 1/1. In terms of biological role, specifically catalyzes the dephosphorylation of 2-phosphoglycolate. Is involved in the dissimilation of the intracellular 2-phosphoglycolate formed during the DNA repair of 3'-phosphoglycolate ends, a major class of DNA lesions induced by oxidative stress. The protein is Phosphoglycolate phosphatase of Xanthomonas campestris pv. campestris (strain 8004).